The primary structure comprises 611 residues: MTIEFTDWPQDRAQRYRDAGYWIDQPLTEILHSRCQAQPQALAIICGERRFTYGELDTLSSILASRLAEQGLGQGDTALVQLPNVAEFYIVLFALLKAGIVPLNALFSHRRLELTAYAKQIVPKLLIASREHEVFRDDAYVQAFAEVGAAPAVTLLLGESDPAASLAHWIETPGSQPVAYAPTAADQVALFQLSGGSTGIPKLIPRTHNDYHYNARACADVCALNAHTRFLCAVPAAHNFLLSSPGALGVFHAGGCVVMAASPEPLSCFALVEQHEVNTVALVPSAVALWLQAAPAHRDKLQSLAYLQVGGAVFADSLARQVPGVLGCQLQQVFGMAEGLINYTRLDDSDEQIFTTQGRPVSPDDEIKIVDEQGVPVAPGEPGMLATRGPYTFCGYYKAPEQNASAFDAEGFYYSGDLVVLTPSGDLRVVGRIKDQINRGGEKVASEEIENLLVLHPEVTHAGLVAMPDEALGEKSCAFVVSRNPSLKAPALRRHLMELGIAEYKLPDRIRLIEAMPLTAVGKIDKKQLRHLVSVENTRTWLQTRLRQLIEDSEELDPEENLIFYGLDSLQVMKLAAELKARGIEVSFEELASTPTLASWWALVEARQKAA.

A Carrier domain is found at 533-608 (VSVENTRTWL…SWWALVEARQ (76 aa)). The residue at position 569 (S569) is an O-(pantetheine 4'-phosphoryl)serine.

Belongs to the ATP-dependent AMP-binding enzyme family. The cofactor is pantetheine 4'-phosphate.

The catalysed reaction is salicylate + holo-[ACP] + ATP = salicyl-[ACP] + AMP + diphosphate. The protein operates within siderophore biosynthesis; pseudomonine biosynthesis. Its function is as follows. Involved in the biosynthesis of the siderophore pseudomonine. Specifically adenylates salicylate and loads it onto its peptidyl carrier domain, via a thioester linkage to the phosphopanthetheine moiety. The protein is Pseudomonine synthase PmsE of Pseudomonas entomophila (strain L48).